Consider the following 73-residue polypeptide: Small ribosomal subunit protein bS18c (73 aa).

It belongs to the bacterial ribosomal protein bS18 family. Part of the 30S ribosomal subunit.

It localises to the plastid. It is found in the chloroplast. The sequence is that of Small ribosomal subunit protein bS18c from Rhodomonas salina (Cryptomonas salina).